Here is a 457-residue protein sequence, read N- to C-terminus: MNYDLIIIGAGPAGYVAAEYAGKHKLKTLVVEKEYFGGVCLNVGCIPTKTLLKRAKIVDYLRHAQDYGISINGQVALNWNQLLEQKGKVVSKLVGGVKAIIASAKAETVMGEAKVLDPNTVEVAGKTYTTKSIVVATGSRPRYLTLPGFAEARQNGFVIDSTQALSLEGVPRKLVVVGGGVIGIEFAFLYASLGSEVTILQGVDRILEIFDTEVSDLVAKLLQTKNVKIITNAQVTRANNNEVFYSQNGQEGSVVGDRILVSIGRIPNTECLDGLNLQRDERNRIVLNQDLQTSIPNIYIVGDANAQLMLAHFAYQQGRYAVNHILNKKQVKPAQKLTCPSCIYTNPEVASVGYTEMELKKQGIPYVKTNLVLAHCGKAIADNETNGFVKMMFDPQTGKILGCCIIAATASDMIAELALAMGAGLTVFDIANSISPHPTINEMIADVCKKALFDHFK.

FAD-binding positions include 32–40 (EKEYFGGVC), lysine 49, and alanine 113. Residues cysteine 40 and cysteine 45 are joined by a disulfide bond. NAD(+)-binding positions include 178–182 (GGGVI), valine 235, and 262–265 (SIGR). FAD-binding residues include aspartate 303 and alanine 311. Catalysis depends on histidine 437, which acts as the Proton acceptor.

Belongs to the class-I pyridine nucleotide-disulfide oxidoreductase family. As to quaternary structure, homodimer. FAD serves as cofactor.

The protein localises to the cytoplasm. It carries out the reaction N(6)-[(R)-dihydrolipoyl]-L-lysyl-[protein] + NAD(+) = N(6)-[(R)-lipoyl]-L-lysyl-[protein] + NADH + H(+). Lipoamide dehydrogenase is a component of the alpha-ketoacid dehydrogenase complexes. This Mycoplasma pneumoniae (strain ATCC 29342 / M129 / Subtype 1) (Mycoplasmoides pneumoniae) protein is Dihydrolipoyl dehydrogenase (pdhD).